Here is a 391-residue protein sequence, read N- to C-terminus: Formate-dependent phosphoribosylglycinamide formyltransferase (391 aa).

N(1)-(5-phospho-beta-D-ribosyl)glycinamide-binding positions include 18-19 and Glu78; that span reads EL. ATP-binding positions include Arg110, Lys151, 156 to 161, 191 to 194, and Glu199; these read SSGKGQ and EEFI. Residues 115-305 enclose the ATP-grasp domain; the sequence is ELAHEELGIR…EFELHLRAIL (191 aa). Mg(2+) contacts are provided by Glu264 and Glu276. N(1)-(5-phospho-beta-D-ribosyl)glycinamide is bound by residues Asp283, Lys353, and 360-361; that span reads RR.

The protein belongs to the PurK/PurT family. Homodimer.

The catalysed reaction is N(1)-(5-phospho-beta-D-ribosyl)glycinamide + formate + ATP = N(2)-formyl-N(1)-(5-phospho-beta-D-ribosyl)glycinamide + ADP + phosphate + H(+). Its pathway is purine metabolism; IMP biosynthesis via de novo pathway; N(2)-formyl-N(1)-(5-phospho-D-ribosyl)glycinamide from N(1)-(5-phospho-D-ribosyl)glycinamide (formate route): step 1/1. Functionally, involved in the de novo purine biosynthesis. Catalyzes the transfer of formate to 5-phospho-ribosyl-glycinamide (GAR), producing 5-phospho-ribosyl-N-formylglycinamide (FGAR). Formate is provided by PurU via hydrolysis of 10-formyl-tetrahydrofolate. The chain is Formate-dependent phosphoribosylglycinamide formyltransferase from Nostoc sp. (strain PCC 7120 / SAG 25.82 / UTEX 2576).